A 57-amino-acid chain; its full sequence is Large ribosomal subunit protein bL32 (57 aa).

It belongs to the bacterial ribosomal protein bL32 family.

The sequence is that of Large ribosomal subunit protein bL32 from Bacillus anthracis (strain A0248).